Here is a 283-residue protein sequence, read N- to C-terminus: DegV domain-containing protein CPE0304 (283 aa).

Positions V3–R281 constitute a DegV domain. Hexadecanoate is bound by residues S60 and S92.

In terms of biological role, may bind long-chain fatty acids, such as palmitate, and may play a role in lipid transport or fatty acid metabolism. The protein is DegV domain-containing protein CPE0304 of Clostridium perfringens (strain 13 / Type A).